The following is a 155-amino-acid chain: SsrA-binding protein (155 aa).

Basic and acidic residues predominate over residues 127-149; sequence KKDYDKRNDMRKKEAKREMERTF. The interval 127–155 is disordered; that stretch reads KKDYDKRNDMRKKEAKREMERTFKSKNQY.

This sequence belongs to the SmpB family.

It is found in the cytoplasm. Its function is as follows. Required for rescue of stalled ribosomes mediated by trans-translation. Binds to transfer-messenger RNA (tmRNA), required for stable association of tmRNA with ribosomes. tmRNA and SmpB together mimic tRNA shape, replacing the anticodon stem-loop with SmpB. tmRNA is encoded by the ssrA gene; the 2 termini fold to resemble tRNA(Ala) and it encodes a 'tag peptide', a short internal open reading frame. During trans-translation Ala-aminoacylated tmRNA acts like a tRNA, entering the A-site of stalled ribosomes, displacing the stalled mRNA. The ribosome then switches to translate the ORF on the tmRNA; the nascent peptide is terminated with the 'tag peptide' encoded by the tmRNA and targeted for degradation. The ribosome is freed to recommence translation, which seems to be the essential function of trans-translation. This chain is SsrA-binding protein, found in Lysinibacillus sphaericus (strain C3-41).